Consider the following 337-residue polypeptide: Protoheme IX farnesyltransferase (337 aa).

A compositionally biased stretch (polar residues) spans M1–V17. Residues M1–R41 are disordered. Residues D27–R41 are compositionally biased toward basic and acidic residues. 8 helical membrane-spanning segments follow: residues I59–P79, L81–F101, S130–A150, L153–L173, W196–W216, V250–P270, V271–V291, and P311–V331.

The protein belongs to the UbiA prenyltransferase family. Protoheme IX farnesyltransferase subfamily.

It is found in the cell membrane. It catalyses the reaction heme b + (2E,6E)-farnesyl diphosphate + H2O = Fe(II)-heme o + diphosphate. The protein operates within porphyrin-containing compound metabolism; heme O biosynthesis; heme O from protoheme: step 1/1. Functionally, converts heme B (protoheme IX) to heme O by substitution of the vinyl group on carbon 2 of heme B porphyrin ring with a hydroxyethyl farnesyl side group. In Cutibacterium acnes (strain DSM 16379 / KPA171202) (Propionibacterium acnes), this protein is Protoheme IX farnesyltransferase.